A 2080-amino-acid chain; its full sequence is Dysferlin (2080 aa).

A C2 1 domain is found at 1–101; it reads MLRVFILYAE…LATPSLSASF (101 aa). Over 1 to 2046 the chain is Cytoplasmic; sequence MLRVFILYAE…FILWRRFRWA (2046 aa). Ca(2+) contacts are provided by D18, I19, D21, and N40. Positions 132 to 144 are enriched in pro residues; that stretch reads LFPPPTPLEPSPT. A disordered region spans residues 132 to 215; that stretch reads LFPPPTPLEP…APTSRKLLSD (84 aa). Residues 155 to 172 are compositionally biased toward acidic residues; that stretch reads GGEEDTEDQGLTGDEAEP. Phosphothreonine is present on T166. Phosphoserine occurs at positions 166 and 167. 2 positions are modified to phosphothreonine: Y197 and P198. 6 consecutive C2 domains span residues 203-321, 360-496, 1136-1262, 1310-1438, 1561-1679, and 1795-1943; these read KRSA…RKWL, DKED…EEEP, GVNR…PLTR, PPPQ…AESP, PMPP…ARCG, and GRPG…KKCS. Ca(2+)-binding residues include D1168, D1174, D1230, and D1232. Residues D1594, D1600, D1649, D1651, D1914, S1917, and D1920 each contribute to the Ca(2+) site. Positions 1995–2017 are disordered; that stretch reads SEHEERPAGQGRDEPNMNPKLED. Residues 2047–2067 form a helical membrane-spanning segment; that stretch reads IILFIILFILLLFLAIFIYAF. Over 2068–2080 the chain is Extracellular; that stretch reads PNYAAMKLVKPFS.

The protein belongs to the ferlin family. As to quaternary structure, interacts with CACNA1S. Interacts with ANXA1; the interaction is Ca(2+)- and injury state-dependent. Interacts with ANXA2; the interaction is Ca(2+)- and injury state-dependent. Interacts with CACNA1S and PARVB. Interacts with TRIM72/MG53; interaction is required for transport to sites of cell injury during repair patch formation. Interacts with RIPOR2; this interaction occurs during early myogenic differentiation. Interacts with CAV3 and PARVB. Interacts with AHNAK; the interaction is direct and Ca(2+)-independent. Interacts with AHNAK2; the interaction is direct and Ca(2+)-independent. It depends on Ca(2+) as a cofactor. As to expression, expressed in skeletal muscle, myoblast, myotube and in the syncytiotrophoblast (STB) of the placenta (at protein level). Ubiquitous. Highly expressed in skeletal muscle. Also found in heart, brain, spleen, intestine, placenta and at lower levels in liver, lung, kidney and pancreas.

Its subcellular location is the cell membrane. It is found in the sarcolemma. It localises to the cytoplasmic vesicle membrane. In terms of biological role, key calcium ion sensor involved in the Ca(2+)-triggered synaptic vesicle-plasma membrane fusion. Plays a role in the sarcolemma repair mechanism of both skeletal muscle and cardiomyocytes that permits rapid resealing of membranes disrupted by mechanical stress. The protein is Dysferlin (DYSF) of Homo sapiens (Human).